The sequence spans 367 residues: Selenoprotein Pa (367 aa).

An N-terminal signal peptide occupies residues 1–19 (MWKALSLTLALCLLVGCSA). Sec-59 is a non-standard amino acid (selenocysteine). N-linked (GlcNAc...) asparagine glycosylation occurs at Asn-109. A compositionally biased stretch (basic and acidic residues) spans 191–220 (EVNKPVEEEPRQDHGHHEHGHHEHQGEAER). Residues 191–241 (EVNKPVEEEPRQDHGHHEHGHHEHQGEAERHRHGHHHPHHHHHHHRGQQQV) form a disordered region. Basic residues predominate over residues 221 to 237 (HRHGHHHPHHHHHHHRG). Residues Sec-267, Sec-273, Sec-279, Sec-290, Sec-292, Sec-294, Sec-310, Sec-320, Sec-322, Sec-336, Sec-338, Sec-346, Sec-353, Sec-355, Sec-362, and Sec-364 are each a non-standard amino acid (selenocysteine). The disordered stretch occupies residues 309 to 367 (LUHCDEPLPASUPUQGLKEQDNHIKETUQURPAPPAEUELSQPTUVUPAGDATUGURKK). The span at 326–336 (KEQDNHIKETU) shows a compositional bias: basic and acidic residues.

This sequence belongs to the selenoprotein P family.

The protein localises to the secreted. In terms of biological role, might be responsible for some of the extracellular antioxidant defense properties of selenium or might be involved in the transport of selenium. This chain is Selenoprotein Pa (sepp1a), found in Danio rerio (Zebrafish).